The following is a 1464-amino-acid chain: DNA polymerase III PolC-type (1464 aa).

In terms of domain architecture, Exonuclease spans 426–582; the sequence is YVVFDVETTG…YDAEATGRLL (157 aa).

This sequence belongs to the DNA polymerase type-C family. PolC subfamily.

It is found in the cytoplasm. It catalyses the reaction DNA(n) + a 2'-deoxyribonucleoside 5'-triphosphate = DNA(n+1) + diphosphate. Its function is as follows. Required for replicative DNA synthesis. This DNA polymerase also exhibits 3' to 5' exonuclease activity. This is DNA polymerase III PolC-type from Streptococcus thermophilus (strain CNRZ 1066).